Consider the following 308-residue polypeptide: MSSGIIFFGTPEFAVPSLKALISRGEKILLVVTQPDKPKGRGKNLQAPEIKKVALQCGLPLCQPEKMKDDNFIKKLKSLNPEFAIVVAYGKILPKEILEIPKHGCINLHASLLPKYRGAAPIQWALINGEKITGVTTMIIDEGLDTGPILLQKEISINDEDNAETLSEKLSVVGAELIIETIDKMRKGIITPKPQTGEITYAPQLKKDDGKINWNNSARKIFNLVRGTYPWPCAYSFLKDERVKIIKTEVLEGNAAPGLIIKAKNELIVGTQEGLLRILLIQPEGKKIMTAKEFISGRKINEGMDSFS.

(6S)-5,6,7,8-tetrahydrofolate is bound at residue 111 to 114; the sequence is SLLP.

Belongs to the Fmt family.

It catalyses the reaction L-methionyl-tRNA(fMet) + (6R)-10-formyltetrahydrofolate = N-formyl-L-methionyl-tRNA(fMet) + (6S)-5,6,7,8-tetrahydrofolate + H(+). Its function is as follows. Attaches a formyl group to the free amino group of methionyl-tRNA(fMet). The formyl group appears to play a dual role in the initiator identity of N-formylmethionyl-tRNA by promoting its recognition by IF2 and preventing the misappropriation of this tRNA by the elongation apparatus. This chain is Methionyl-tRNA formyltransferase, found in Thermodesulfovibrio yellowstonii (strain ATCC 51303 / DSM 11347 / YP87).